The following is a 283-amino-acid chain: Arylamine N-acetyltransferase (283 aa).

Cys-70 acts as the Acyl-thioester intermediate in catalysis. Residues His-110 and Asp-127 contribute to the active site.

Belongs to the arylamine N-acetyltransferase family. In terms of assembly, homodimer and homotetramer.

It carries out the reaction an arylamine + acetyl-CoA = an N-acetylarylamine + CoA. Catalyzes the transfer of the acetyl group from acetyl coenzyme A to the free amino group of arylamines and hydrazines. Is able to utilize not only acetyl-CoA, but also n-propionyl-CoA and acetoacetyl-CoA as acyl donors, although at a lower rate. As acetyl-CoA and propionyl-CoA are products of cholesterol catabolism and the nat gene is likely present in the same operon than genes involved in cholesterol degradation, this enzyme could have a role in the utilization and regulation of these CoA species. This is Arylamine N-acetyltransferase (nat) from Mycobacterium bovis (strain ATCC BAA-935 / AF2122/97).